A 953-amino-acid polypeptide reads, in one-letter code: MSSGLWNQEKVTSPYWEERLFYLLLQECSVTDKQTQKLLRVPKGSIGQYIQDRSVGHSRVPSAKGKKNQIGLKILEQPHAVLFVDEKDVVEINEKFTELLLAITNCEERLSLFRNRIRLSKGLQVDVGSPVRVQLRSGEEKFPGVVRFRGPLLAERTVSGIFFGVELLEEGRGQGFTDGVYQGKQLFQCDEDCGVFVALDKLELIEDDDNGLESDFAGPGDTVQVEPPPLEINSRVSLKVGESTESGTVIFCDVLPGKESLGYFVGVDMDNPIGNWDGRFDGVQLCSFASVESTVLLHINDIIPDSVTQERRPPKLAFMSRGVGDKGSSSHNKPKVTGSTSDPGSRNRSELFYTLNGSSVDSQQQSKSKNPWYIDEVAEDPAKSLTEMSSDFGHSSPPPQPPSMNSLSSENRFHSLPFSLTKMPNTNGSMAHSPLSLSVQSVMGELNSTPVQESPPMPSSSGNAHGLEVGSLAEVKENPPFYGVIRWIGQPPGLSDVLAGLELEDECAGCTDGTFRGTRYFTCALKKALFVKLKSCRPDSRFASLQPVSNQIERCNSLAFGGYLSEVVEENTPPKMEKEGLEIMIGKKKGIQGHYNSCYLDSTLFCLFAFSSALDTVLLRPKEKNDVEYYSETQELLRTEIVNPLRIYGYVCATKIMKLRKILEKVEAASGFTSEEKDPEEFLNILFHDILRVEPLLKIRSAGQKVQDCNFYQIFMEKNEKVGVPTIQQLLEWSFINSNLKFAEAPSCLIIQMPRFGKDFKLFKKIFPSLELNITDLLEDTPRQCRICGGLAMYECRECYDDPDISAGKIKQFCKTCSTQVHLHPRRLNHTYHPVSLPKDLPDWDWRHGCIPCQKMELFAVLCIETSHYVAFVKYGKDDSAWLFFDSMADRDGGQNGFNIPQVTPCPEVGEYLKMSLEDLHSLDSRRIQGCARRLLCDAYMCMYQSPTMSLYK.

Positions 106-590 are interaction with TRIP; it reads CEERLSLFRN…LEIMIGKKKG (485 aa). CAP-Gly domains are found at residues 153–198 and 253–286; these read LAER…VFVA and DVLPGKESLGYFVGVDMDNPIGNWDGRFDGVQLC. The tract at residues 318–350 is disordered; it reads FMSRGVGDKGSSSHNKPKVTGSTSDPGSRNRSE. A compositionally biased stretch (polar residues) spans 327 to 346; that stretch reads GSSSHNKPKVTGSTSDPGSR. Ser-384 carries the post-translational modification Phosphoserine. The tract at residues 387-410 is disordered; the sequence is EMSSDFGHSSPPPQPPSMNSLSSE. The tract at residues 391–466 is interaction with TRAF2; that stretch reads DFGHSSPPPQ…MPSSSGNAHG (76 aa). Phosphoserine occurs at positions 415 and 419. The interaction with IKBKG/NEMO stretch occupies residues 467–681; sequence LEVGSLAEVK…FTSEEKDPEE (215 aa). In terms of domain architecture, CAP-Gly 3 spans 489 to 532; it reads GQPPGLSDVLAGLELEDECAGCTDGTFRGTRYFTCALKKALFVK. The region spanning 589–947 is the USP domain; that stretch reads KGIQGHYNSC…DAYMCMYQSP (359 aa). Cys-598 (nucleophile) is an active-site residue. The segment at 778-830 is B-box; the sequence is LEDTPRQCRICGGLAMYECRECYDDPDISAGKIKQFCKTCSTQVHLHPRRLNH. Cys-785, Cys-788, Cys-796, Cys-799, Cys-814, Cys-817, His-822, and His-830 together coordinate Zn(2+). Catalysis depends on His-868, which acts as the Proton acceptor.

Belongs to the peptidase C19 family. Interacts (via CAP-Gly domain) with IKBKG/NEMO (via proline-rich C-terminal region). Interacts with TRAF2 and TRIP. Interacts with PLK1, DVL1, DVL3, MAVS, TBK1, IKKE and RIGI. Interacts (via CAP-Gly domain) with microtubules. Interacts with HDAC6 and BCL3. Interacts with MAP3K7. Identified in a complex with TRAF6 and SQSTM1. Interacts with OPTN and SQSTM1. Interacts with CEP350. Interacts with RNF31; the interaction is indirect and is mediated via SPATA2. Interacts with SPATA2 (via the PUB domain); the interaction is direct and recruits CYLD to the LUBAC complex, thereby regulating TNF-alpha-induced necroptosis. In terms of processing, phosphorylated on several serine residues by IKKA and/or IKKB in response to immune stimuli. Phosphorylation requires IKBKG. Phosphorylation abolishes TRAF2 deubiquitination, interferes with the activation of Jun kinases, and strongly reduces CD40-dependent gene activation by NF-kappa-B. Post-translationally, ubiquitinated. Polyubiquitinated in hepatocytes treated with palmitic acid. Ubiquitination is mediated by E3 ligase TRIM47 and leads to proteasomal degradation.

It localises to the cytoplasm. Its subcellular location is the perinuclear region. The protein localises to the cytoskeleton. It is found in the cell membrane. The protein resides in the microtubule organizing center. It localises to the centrosome. Its subcellular location is the spindle. The protein localises to the cilium basal body. The enzyme catalyses Thiol-dependent hydrolysis of ester, thioester, amide, peptide and isopeptide bonds formed by the C-terminal Gly of ubiquitin (a 76-residue protein attached to proteins as an intracellular targeting signal).. Its function is as follows. Deubiquitinase that specifically cleaves 'Lys-63'- and linear 'Met-1'-linked polyubiquitin chains and is involved in NF-kappa-B activation and TNF-alpha-induced necroptosis. Negatively regulates NF-kappa-B activation by deubiquitinating upstream signaling factors. Contributes to the regulation of cell survival, proliferation and differentiation via its effects on NF-kappa-B activation. Negative regulator of Wnt signaling. Inhibits HDAC6 and thereby promotes acetylation of alpha-tubulin and stabilization of microtubules. Plays a role in the regulation of microtubule dynamics, and thereby contributes to the regulation of cell proliferation, cell polarization, cell migration, and angiogenesis. Required for normal cell cycle progress and normal cytokinesis. Inhibits nuclear translocation of NF-kappa-B. Plays a role in the regulation of inflammation and the innate immune response, via its effects on NF-kappa-B activation. Dispensable for the maturation of intrathymic natural killer cells, but required for the continued survival of immature natural killer cells. Negatively regulates TNFRSF11A signaling and osteoclastogenesis. Involved in the regulation of ciliogenesis, allowing ciliary basal bodies to migrate and dock to the plasma membrane; this process does not depend on NF-kappa-B activation. Ability to remove linear ('Met-1'-linked) polyubiquitin chains regulates innate immunity and TNF-alpha-induced necroptosis: recruited to the LUBAC complex via interaction with SPATA2 and restricts linear polyubiquitin formation on target proteins. Regulates innate immunity by restricting linear polyubiquitin formation on RIPK2 in response to NOD2 stimulation. Involved in TNF-alpha-induced necroptosis by removing linear ('Met-1'-linked) polyubiquitin chains from RIPK1, thereby regulating the kinase activity of RIPK1. Negatively regulates intestinal inflammation by removing 'Lys-63' linked polyubiquitin chain of NLRP6, thereby reducing the interaction between NLRP6 and PYCARD/ASC and formation of the NLRP6 inflammasome. Does not catalyze deubiquitination of heterotypic 'Lys-63'-/'Lys-48'-linked branched ubiquitin chains. Removes 'Lys-63' linked polyubiquitin chain of MAP3K7, which inhibits phosphorylation and blocks downstream activation of the JNK-p38 kinase cascades. Also removes 'Lys-63'-linked polyubiquitin chains of MAP3K1 and MA3P3K3, which inhibit their interaction with MAP2K1 and MAP2K2. This chain is Ubiquitin carboxyl-terminal hydrolase CYLD (Cyld), found in Rattus norvegicus (Rat).